The chain runs to 170 residues: Crossover junction endodeoxyribonuclease RuvC (170 aa).

Catalysis depends on residues Asp11, Glu71, and Asp143. Positions 11, 71, and 143 each coordinate Mg(2+).

This sequence belongs to the RuvC family. As to quaternary structure, homodimer which binds Holliday junction (HJ) DNA. The HJ becomes 2-fold symmetrical on binding to RuvC with unstacked arms; it has a different conformation from HJ DNA in complex with RuvA. In the full resolvosome a probable DNA-RuvA(4)-RuvB(12)-RuvC(2) complex forms which resolves the HJ. The cofactor is Mg(2+).

The protein localises to the cytoplasm. It catalyses the reaction Endonucleolytic cleavage at a junction such as a reciprocal single-stranded crossover between two homologous DNA duplexes (Holliday junction).. Functionally, the RuvA-RuvB-RuvC complex processes Holliday junction (HJ) DNA during genetic recombination and DNA repair. Endonuclease that resolves HJ intermediates. Cleaves cruciform DNA by making single-stranded nicks across the HJ at symmetrical positions within the homologous arms, yielding a 5'-phosphate and a 3'-hydroxyl group; requires a central core of homology in the junction. The consensus cleavage sequence is 5'-(A/T)TT(C/G)-3'. Cleavage occurs on the 3'-side of the TT dinucleotide at the point of strand exchange. HJ branch migration catalyzed by RuvA-RuvB allows RuvC to scan DNA until it finds its consensus sequence, where it cleaves and resolves the cruciform DNA. The sequence is that of Crossover junction endodeoxyribonuclease RuvC from Rhizobium rhizogenes (strain K84 / ATCC BAA-868) (Agrobacterium radiobacter).